Consider the following 393-residue polypeptide: Phospho-N-acetylmuramoyl-pentapeptide-transferase (393 aa).

The next 10 membrane-spanning stretches (helical) occupy residues 29–49, 75–95, 101–121, 138–158, 194–214, 226–246, 263–283, 290–310, 315–335, and 370–390; these read RAVM…PWVI, TPTM…LLWF, FVWV…VDDW, YLWQ…SVSE, VSYP…IVGA, GLAI…AYVT, AGEL…FLWF, VFMG…IAVI, IVLG…MAQV, and QVVV…LSTL.

This sequence belongs to the glycosyltransferase 4 family. MraY subfamily. It depends on Mg(2+) as a cofactor.

It localises to the cell inner membrane. It carries out the reaction UDP-N-acetyl-alpha-D-muramoyl-L-alanyl-gamma-D-glutamyl-meso-2,6-diaminopimeloyl-D-alanyl-D-alanine + di-trans,octa-cis-undecaprenyl phosphate = di-trans,octa-cis-undecaprenyl diphospho-N-acetyl-alpha-D-muramoyl-L-alanyl-D-glutamyl-meso-2,6-diaminopimeloyl-D-alanyl-D-alanine + UMP. The protein operates within cell wall biogenesis; peptidoglycan biosynthesis. In terms of biological role, catalyzes the initial step of the lipid cycle reactions in the biosynthesis of the cell wall peptidoglycan: transfers peptidoglycan precursor phospho-MurNAc-pentapeptide from UDP-MurNAc-pentapeptide onto the lipid carrier undecaprenyl phosphate, yielding undecaprenyl-pyrophosphoryl-MurNAc-pentapeptide, known as lipid I. This chain is Phospho-N-acetylmuramoyl-pentapeptide-transferase, found in Leptothrix cholodnii (strain ATCC 51168 / LMG 8142 / SP-6) (Leptothrix discophora (strain SP-6)).